A 675-amino-acid polypeptide reads, in one-letter code: MRVLGGRTGTLLACLALVLPVLEANFLSRQHASQVLIRRRRANTLLEETKKGNLERECIEELCNKEEAREIFENNPETEYFYPKYLGCLGSFRAGLFTAARLSTNAYPDLRSCVNAISDQCNPLPCNEDGFMTCKDGQATFTCICKSGWQGEKCESDINECKDPVNINGGCSQICENTPGSYHCSCKNGFVMLSNKKDCKDVDECVLKPSICGTAVCKNIPGDFECECAEGYKYNPVSKSCDDVDECAENLCAQLCVNYPGGYSCYCDGKKGFKLAQDQKSCEAVPVCLPLDLDKNYELLYLAEQFVGVVLYLKFRLPETTRFSAEFDFRTYDSEGVILYAESSDHSAWFLIALREGKIEIQFKNEKTTKMTTGGKVINDGLWHMVSVEELEQSISVKIAKEAVMNINKPGSLFKPTNGFLETKVYFAGVPRKMENALIRPINPRLDGCIRGWNLMNQGTSGVKEIIQEKQNKHCLVNVEKGSYYPGTGVAQFSINYKNESNPEAWQINVSLNIRPSAGTGVMLALVSDNTVPFALSLVDSATEKLQDILVSVESMVIGRIEAISLCSDQQTFLEIRVNRNNLELSTQLRKDSFHSEDFQRQFAILDEAMKGTVVTYLGGLPDVPFSATPVNAFYQGCMEVNINGVQVDLDEAISKHNDIRAHSCPSVWQKTKHT.

The signal sequence occupies residues 1-24 (MRVLGGRTGTLLACLALVLPVLEA). The propeptide occupies 25–41 (NFLSRQHASQVLIRRRR). Residues 42–87 (ANTLLEETKKGNLERECIEELCNKEEAREIFENNPETEYFYPKYLG) form the Gla domain. Residues Glu47, Glu48, Glu55, Glu57, Glu60, Glu61, Glu66, Glu67, Glu70, Glu73, and Glu77 each carry the 4-carboxyglutamate modification. A disulfide bridge connects residues Cys58 and Cys63. 16 cysteine pairs are disulfide-bonded: Cys88/Cys113, Cys121/Cys134, Cys126/Cys143, Cys145/Cys154, Cys161/Cys175, Cys171/Cys184, Cys186/Cys199, Cys205/Cys217, Cys212/Cys226, Cys228/Cys241, Cys247/Cys256, Cys252/Cys265, Cys267/Cys282, Cys288/Cys567, Cys449/Cys475, and Cys638/Cys665. The thrombin-sensitive stretch occupies residues 88 to 116 (CLGSFRAGLFTAARLSTNAYPDLRSCVNA). The EGF-like 1 domain occupies 117 to 155 (ISDQCNPLPCNEDGFMTCKDGQATFTCICKSGWQGEKCE). Asp136 carries the post-translational modification (3R)-3-hydroxyaspartate. Residues 157–200 (DINECKDPVNINGGCSQICENTPGSYHCSCKNGFVMLSNKKDCK) enclose the EGF-like 2; calcium-binding domain. The residue at position 177 (Asn177) is a (3R)-3-hydroxyasparagine. The EGF-like 3; calcium-binding domain maps to 201 to 242 (DVDECVLKPSICGTAVCKNIPGDFECECAEGYKYNPVSKSCD). (3R)-3-hydroxyasparagine is present on Asn219. One can recognise an EGF-like 4; calcium-binding domain in the interval 243-283 (DVDECAENLCAQLCVNYPGGYSCYCDGKKGFKLAQDQKSCE). (3R)-3-hydroxyasparagine is present on Asn258. Laminin G-like domains lie at 299-475 (LLYL…NKHC) and 484-665 (YYPG…AHSC). 2 N-linked (GlcNAc...) asparagine glycosylation sites follow: Asn499 and Asn509.

The iron and 2-oxoglutarate dependent 3-hydroxylation of aspartate and asparagine is (R) stereospecific within EGF domains. Plasma.

Its subcellular location is the secreted. Anticoagulant plasma protein; it is a cofactor to activated protein C in the degradation of coagulation factors Va and VIIIa. It helps to prevent coagulation and stimulating fibrinolysis. The polypeptide is Vitamin K-dependent protein S (PROS1) (Bos taurus (Bovine)).